Consider the following 384-residue polypeptide: Aurora kinase (384 aa).

Composition is skewed to polar residues over residues 1 to 12 (MSYPNNKENSNN) and 19 to 29 (SVPSKQPQRVL). Positions 1–100 (MSYPNNKENS…SSSSSSSQSV (100 aa)) are disordered. The segment covering 30–99 (QQQNTNINNH…SSSSSSSSQS (70 aa)) has biased composition (low complexity). A Protein kinase domain is found at 110–360 (FDIGKLLGMG…LKDVINHPWI (251 aa)). ATP-binding positions include 116–124 (LGMGRFGHV) and lysine 139. Aspartate 233 functions as the Proton acceptor in the catalytic mechanism.

It belongs to the protein kinase superfamily. Ser/Thr protein kinase family. Aurora subfamily. As to quaternary structure, interacts with icpA. Forms a complex at the central spindle.

The protein resides in the cytoplasm. It is found in the chromosome. Its subcellular location is the centromere. It localises to the cytoskeleton. The protein localises to the spindle pole. The protein resides in the cleavage furrow. It is found in the cell projection. Its subcellular location is the neuron projection. It catalyses the reaction L-seryl-[protein] + ATP = O-phospho-L-seryl-[protein] + ADP + H(+). The catalysed reaction is L-threonyl-[protein] + ATP = O-phospho-L-threonyl-[protein] + ADP + H(+). Part of a chromosomal passenger complex. This chain is Aurora kinase (aurK), found in Dictyostelium discoideum (Social amoeba).